Reading from the N-terminus, the 150-residue chain is Cytochrome b5 type B (150 aa).

A propeptide spanning residues 1–15 (MSGSMATAEASGSDG) is cleaved from the precursor. Positions 1 to 20 (MSGSMATAEASGSDGKGQEV) are disordered. The residue at position 23 (S23) is a Phosphoserine. Positions 24-100 (VTYYRLEEVA…LKQYYIGDIH (77 aa)) constitute a Cytochrome b5 heme-binding domain. K34 is subject to N6-acetyllysine. S37 carries the phosphoserine modification. Residue K39 is modified to N6-methyllysine. 2 residues coordinate heme: H59 and H83. The residue at position 84 (S84) is a Phosphoserine. A helical membrane pass occupies residues 123–140 (WAYWILPIIGAVLLGFLY).

It belongs to the cytochrome b5 family. Component of a complex composed of cytochrome b5, NADH-cytochrome b5 reductase (CYB5R3) and MTARC2.

Its subcellular location is the mitochondrion outer membrane. Its function is as follows. Cytochrome b5 is a membrane-bound hemoprotein functioning as an electron carrier for several membrane-bound oxygenases. This Homo sapiens (Human) protein is Cytochrome b5 type B (CYB5B).